The chain runs to 111 residues: Phosphoribosyl-AMP cyclohydrolase (111 aa).

Asp80 contacts Mg(2+). A Zn(2+)-binding site is contributed by Cys81. Mg(2+) contacts are provided by Asp82 and Asp84. Zn(2+)-binding residues include Cys97 and Cys104.

It belongs to the PRA-CH family. As to quaternary structure, homodimer. Mg(2+) is required as a cofactor. Zn(2+) serves as cofactor.

The protein resides in the cytoplasm. The catalysed reaction is 1-(5-phospho-beta-D-ribosyl)-5'-AMP + H2O = 1-(5-phospho-beta-D-ribosyl)-5-[(5-phospho-beta-D-ribosylamino)methylideneamino]imidazole-4-carboxamide. Its pathway is amino-acid biosynthesis; L-histidine biosynthesis; L-histidine from 5-phospho-alpha-D-ribose 1-diphosphate: step 3/9. Catalyzes the hydrolysis of the adenine ring of phosphoribosyl-AMP. In Mycobacterium marinum (strain ATCC BAA-535 / M), this protein is Phosphoribosyl-AMP cyclohydrolase.